We begin with the raw amino-acid sequence, 124 residues long: Large ribosomal subunit protein eL31 (124 aa).

Tyrosine 102 is subject to Phosphotyrosine.

It belongs to the eukaryotic ribosomal protein eL31 family.

The polypeptide is Large ribosomal subunit protein eL31 (RpL31) (Drosophila melanogaster (Fruit fly)).